Reading from the N-terminus, the 338-residue chain is MSDRLKPLIGTAATRPLTREEAEFAFECLFEGEATPAQMGGLLMALRTRGETVDEYAAAATVMRAKCHKVRAPHGAIDIVGTGGDGKGTLNISTATAFVVAGAGVPVAKHGNRNLSSKSGAADALTEMGLNVMIGPERVEECLMEAGIGFMMAPMHHPAMRHVGPVRAELGTRTIFNILGPLTNPAGVKRQLTGAFSPDLIRPMAEVLAALGSEKAWLVHGGDGTDELAISAASKVAALEGGQIREFDLHPEEAGLPVHPFEEIVGGTPAENAQAFRALLEGAPGAYRDAVLLNAAAALVVADRAPGLREGVEIATESILSGAAKAKVALLARLTNAA.

5-phospho-alpha-D-ribose 1-diphosphate is bound by residues Gly81, 84–85 (GD), Thr89, 91–94 (NIST), 109–117 (KHGNRNLSS), and Ala121. Residue Gly81 coordinates anthranilate. Ser93 is a binding site for Mg(2+). Asn112 contacts anthranilate. Arg167 is an anthranilate binding site. Mg(2+) is bound by residues Asp226 and Glu227.

Belongs to the anthranilate phosphoribosyltransferase family. Homodimer. Mg(2+) serves as cofactor.

The enzyme catalyses N-(5-phospho-beta-D-ribosyl)anthranilate + diphosphate = 5-phospho-alpha-D-ribose 1-diphosphate + anthranilate. It participates in amino-acid biosynthesis; L-tryptophan biosynthesis; L-tryptophan from chorismate: step 2/5. In terms of biological role, catalyzes the transfer of the phosphoribosyl group of 5-phosphorylribose-1-pyrophosphate (PRPP) to anthranilate to yield N-(5'-phosphoribosyl)-anthranilate (PRA). This Cereibacter sphaeroides (strain ATCC 17025 / ATH 2.4.3) (Rhodobacter sphaeroides) protein is Anthranilate phosphoribosyltransferase.